The following is a 199-amino-acid chain: MSKQNKKDWKKFKDEHKEEHKVENEILEEETDEESQHQEPALGHPSYTALEEQLTLAEQKAHENWEKSVRALAELENVRRRMEREVANAHKYGVEKLISALLPVVDSLEQALQLADKNSDPSMHEGLELTMKLFLDALQKFDVEQIDPLGQTFDPQQHEAMSMQPAPGAPPNSVITVFQKGYKLSDRVIRPARVIVSTK.

The segment covering 1–24 (MSKQNKKDWKKFKDEHKEEHKVEN) has biased composition (basic and acidic residues). Residues 1-52 (MSKQNKKDWKKFKDEHKEEHKVENEILEEETDEESQHQEPALGHPSYTALEE) are disordered.

The protein belongs to the GrpE family. As to quaternary structure, homodimer.

It is found in the cytoplasm. In terms of biological role, participates actively in the response to hyperosmotic and heat shock by preventing the aggregation of stress-denatured proteins, in association with DnaK and GrpE. It is the nucleotide exchange factor for DnaK and may function as a thermosensor. Unfolded proteins bind initially to DnaJ; upon interaction with the DnaJ-bound protein, DnaK hydrolyzes its bound ATP, resulting in the formation of a stable complex. GrpE releases ADP from DnaK; ATP binding to DnaK triggers the release of the substrate protein, thus completing the reaction cycle. Several rounds of ATP-dependent interactions between DnaJ, DnaK and GrpE are required for fully efficient folding. The sequence is that of Protein GrpE from Legionella pneumophila.